A 304-amino-acid chain; its full sequence is Protein INO2 (304 aa).

One can recognise a bHLH domain in the interval 236–290 (VRKWKHVQMEKIRRINTKEAFERLIKSVRTPPKENGKRIPKHILLTCVMNDIKSI).

As to quaternary structure, efficient DNA binding requires dimerization with another bHLH protein.

It is found in the nucleus. Positive regulatory factor required for depression of the coregulated phospholipid biosynthetic enzymes. Also involved in the expression of ITR1. This chain is Protein INO2 (INO2), found in Saccharomyces cerevisiae (strain ATCC 204508 / S288c) (Baker's yeast).